Reading from the N-terminus, the 196-residue chain is Potassium-transporting ATPase KdpC subunit (196 aa).

Residues 7-27 form a helical membrane-spanning segment; that stretch reads PAIVSAGLFTVLLGLAYPLAV.

Belongs to the KdpC family. In terms of assembly, the system is composed of three essential subunits: KdpA, KdpB and KdpC.

It localises to the cell inner membrane. Part of the high-affinity ATP-driven potassium transport (or Kdp) system, which catalyzes the hydrolysis of ATP coupled with the electrogenic transport of potassium into the cytoplasm. This subunit acts as a catalytic chaperone that increases the ATP-binding affinity of the ATP-hydrolyzing subunit KdpB by the formation of a transient KdpB/KdpC/ATP ternary complex. The chain is Potassium-transporting ATPase KdpC subunit from Caulobacter sp. (strain K31).